The following is a 70-amino-acid chain: SPbeta prophage-derived uncharacterized HTH-type transcriptional regulator YopO (70 aa).

Residues 5 to 59 (IKQLMVKRGITIEELSRETMIDMQTLNKIIEMPDESDVTTIKLIALVLNVSIDEL) form the HTH cro/C1-type domain. A DNA-binding region (H-T-H motif) is located at residues 16-35 (IEELSRETMIDMQTLNKIIE).

This chain is SPbeta prophage-derived uncharacterized HTH-type transcriptional regulator YopO (yopO), found in Bacillus subtilis (strain 168).